A 123-amino-acid polypeptide reads, in one-letter code: Intracellular iron chaperone frataxin (123 aa).

As to quaternary structure, homodimer, upon Fe(2+) binding. Interacts with the SufS/SufU complex. Interacts with CpfC. Fe(2+) serves as cofactor.

The protein resides in the cytoplasm. Its function is as follows. Plays an essential role in iron intracellular trafficking to iron cofactor biogenesis systems including iron-sulfur cluster (Fe-S) or heme assembly. Promotes the biosynthesis of iron-sulfur clusters by delivering Fe to the complex composed of the cysteine desulfurase SufS and the zinc-dependent sulfurtransferase SufU. Also plays a critical role in coproporphyrin-dependent heme b biogenesis and thus provides an essential function for the bacterial global metabolism. In Bacillus subtilis (strain 168), this protein is Intracellular iron chaperone frataxin (fra).